Here is a 424-residue protein sequence, read N- to C-terminus: Adenylosuccinate synthetase 2 (424 aa).

GTP is bound by residues 11-17 (GDEGKGK) and 39-41 (GHT). D12 serves as the catalytic Proton acceptor. Residues D12 and G39 each contribute to the Mg(2+) site. IMP is bound by residues 12–15 (DEGK), 37–40 (NAGH), T127, R141, Q223, T238, and R302. The active-site Proton donor is the H40. Position 298–304 (298–304 (TTTGRGR)) interacts with substrate. GTP is bound by residues R304, 330–332 (KLD), and 412–414 (SVG).

The protein belongs to the adenylosuccinate synthetase family. Homodimer. Requires Mg(2+) as cofactor.

It is found in the cytoplasm. The catalysed reaction is IMP + L-aspartate + GTP = N(6)-(1,2-dicarboxyethyl)-AMP + GDP + phosphate + 2 H(+). It functions in the pathway purine metabolism; AMP biosynthesis via de novo pathway; AMP from IMP: step 1/2. Plays an important role in the de novo pathway of purine nucleotide biosynthesis. Catalyzes the first committed step in the biosynthesis of AMP from IMP. The protein is Adenylosuccinate synthetase 2 of Methanosarcina acetivorans (strain ATCC 35395 / DSM 2834 / JCM 12185 / C2A).